The chain runs to 688 residues: Glycine--tRNA ligase beta subunit (688 aa).

This sequence belongs to the class-II aminoacyl-tRNA synthetase family. As to quaternary structure, tetramer of two alpha and two beta subunits.

Its subcellular location is the cytoplasm. It carries out the reaction tRNA(Gly) + glycine + ATP = glycyl-tRNA(Gly) + AMP + diphosphate. This is Glycine--tRNA ligase beta subunit from Vibrio atlanticus (strain LGP32) (Vibrio splendidus (strain Mel32)).